A 327-amino-acid chain; its full sequence is Lipoyl synthase (327 aa).

Residues cysteine 72, cysteine 77, cysteine 83, cysteine 98, cysteine 102, cysteine 105, and serine 313 each coordinate [4Fe-4S] cluster. Positions 83 to 302 (CWSHGTATIM…RKVGLEKGFL (220 aa)) constitute a Radical SAM core domain.

It belongs to the radical SAM superfamily. Lipoyl synthase family. The cofactor is [4Fe-4S] cluster.

It is found in the cytoplasm. The enzyme catalyses [[Fe-S] cluster scaffold protein carrying a second [4Fe-4S](2+) cluster] + N(6)-octanoyl-L-lysyl-[protein] + 2 oxidized [2Fe-2S]-[ferredoxin] + 2 S-adenosyl-L-methionine + 4 H(+) = [[Fe-S] cluster scaffold protein] + N(6)-[(R)-dihydrolipoyl]-L-lysyl-[protein] + 4 Fe(3+) + 2 hydrogen sulfide + 2 5'-deoxyadenosine + 2 L-methionine + 2 reduced [2Fe-2S]-[ferredoxin]. The protein operates within protein modification; protein lipoylation via endogenous pathway; protein N(6)-(lipoyl)lysine from octanoyl-[acyl-carrier-protein]: step 2/2. Catalyzes the radical-mediated insertion of two sulfur atoms into the C-6 and C-8 positions of the octanoyl moiety bound to the lipoyl domains of lipoate-dependent enzymes, thereby converting the octanoylated domains into lipoylated derivatives. This is Lipoyl synthase from Francisella tularensis subsp. mediasiatica (strain FSC147).